The primary structure comprises 526 residues: Peptide chain release factor 3 (526 aa).

The 269-residue stretch at 9–277 folds into the tr-type G domain; sequence DRRRTFAIVS…TFVDHAPAPL (269 aa). GTP is bound by residues 18–25, 86–90, and 140–143; these read SHPDAGKT, DTPGH, and NKLD.

The protein belongs to the TRAFAC class translation factor GTPase superfamily. Classic translation factor GTPase family. PrfC subfamily.

Its subcellular location is the cytoplasm. In terms of biological role, increases the formation of ribosomal termination complexes and stimulates activities of RF-1 and RF-2. It binds guanine nucleotides and has strong preference for UGA stop codons. It may interact directly with the ribosome. The stimulation of RF-1 and RF-2 is significantly reduced by GTP and GDP, but not by GMP. The protein is Peptide chain release factor 3 of Geobacter sulfurreducens (strain ATCC 51573 / DSM 12127 / PCA).